A 477-amino-acid chain; its full sequence is ATP-dependent rRNA helicase RRP3 (477 aa).

The tract at residues 1 to 22 (MSVKVDGMINKKSKTHSKKLDA) is disordered. Residues 65 to 93 (KSFNELKLIPELLEAIQQMKFTKPTPIQS) carry the Q motif motif. A Helicase ATP-binding domain is found at 96-267 (IPHALEGKDI…RASLHNPVRV (172 aa)). Residue 109–116 (AQTGSGKT) participates in ATP binding. Positions 215 to 218 (DEAD) match the DEAD box motif. The Helicase C-terminal domain maps to 294-438 (YLIHLLNEFL…KDPSPSKAVL (145 aa)). The interval 452 to 477 (AIRQTKDFHEKRNPKKNRDDRDREER) is disordered.

This sequence belongs to the DEAD box helicase family. DDX47/RRP3 subfamily. Interacts with the SSU processome.

It is found in the nucleus. The catalysed reaction is ATP + H2O = ADP + phosphate + H(+). In terms of biological role, ATP-dependent rRNA helicase required for pre-ribosomal RNA processing. Involved in the maturation of the 35S-pre-rRNA and to its cleavage to mature 18S rRNA. This chain is ATP-dependent rRNA helicase RRP3, found in Debaryomyces hansenii (strain ATCC 36239 / CBS 767 / BCRC 21394 / JCM 1990 / NBRC 0083 / IGC 2968) (Yeast).